The following is a 494-amino-acid chain: Tripartite motif-containing protein 5 (494 aa).

The residue at position 2 (A2) is an N-acetylalanine. The RING-type zinc finger occupies C15–R59. S86 is modified (phosphoserine). The B box-type zinc finger occupies Q91–V132. Positions 96, 99, 118, and 124 each coordinate Zn(2+). A coiled-coil region spans residues V132 to M222. Residues F186–N199 are required for interaction with GABARAP and for autophagy. Residues P280–S494 form the B30.2/SPRY domain.

It belongs to the TRIM/RBCC family. As to quaternary structure, can form homodimers and homotrimers. In addition to lower-order dimerization, also exhibits a higher-order multimerization and both low- and high-order multimerizations are essential for its restriction activity. Interacts with BTBD1 and BTBD2. Interacts with PSMC4, PSMC5, PSMD7 and HSPA8/HSC70. Interacts (via B30.2/SPRY domain) with HSPA1A/B. Interacts with PSMC2, MAP3K7/TAK1, TAB2 and TAB3. Interacts with SQSTM1. Interacts with TRIM6 and TRIM34. Interacts with ULK1 (phosphorylated form), GABARAP, GABARAPL1, GABARAPL2, MAP1LC3A, MAP1LC3C and BECN1. Degraded in a proteasome-independent fashion in the absence of viral infection but in a proteasome-dependent fashion following exposure to restriction sensitive virus. In terms of processing, autoubiquitinated in a RING finger- and UBE2D2-dependent manner. Monoubiquitinated by TRIM21. Deubiquitinated by Yersinia YopJ. Ubiquitination may not lead to proteasomal degradation.

The protein resides in the cytoplasm. It is found in the nucleus. The catalysed reaction is S-ubiquitinyl-[E2 ubiquitin-conjugating enzyme]-L-cysteine + [acceptor protein]-L-lysine = [E2 ubiquitin-conjugating enzyme]-L-cysteine + N(6)-ubiquitinyl-[acceptor protein]-L-lysine.. The protein operates within protein modification; protein ubiquitination. In terms of biological role, capsid-specific restriction factor that prevents infection from non-host-adapted retroviruses. Blocks viral replication early in the life cycle, after viral entry but before reverse transcription. In addition to acting as a capsid-specific restriction factor, also acts as a pattern recognition receptor that activates innate immune signaling in response to the retroviral capsid lattice. Binding to the viral capsid triggers its E3 ubiquitin ligase activity, and in concert with the heterodimeric ubiquitin conjugating enzyme complex UBE2V1-UBE2N (also known as UBC13-UEV1A complex) generates 'Lys-63'-linked polyubiquitin chains, which in turn are catalysts in the autophosphorylation of the MAP3K7/TAK1 complex (includes TAK1, TAB2, and TAB3). Activation of the MAP3K7/TAK1 complex by autophosphorylation results in the induction and expression of NF-kappa-B and MAPK-responsive inflammatory genes, thereby leading to an innate immune response in the infected cell. Plays a role in regulating autophagy through activation of autophagy regulator BECN1 by causing its dissociation from its inhibitors BCL2 and TAB2. This is Tripartite motif-containing protein 5 (TRIM5) from Pithecia pithecia (White-faced saki).